The following is a 436-amino-acid chain: Magnesium transporter MRS2-4 (436 aa).

A disordered region spans residues 1–56; it reads MGKGPLSFRRLSSIRHRKKGSAVKDDSAQTSTPSSPPPPLPIHAGGSAVGATGKAK. Positions 12–21 are enriched in basic residues; that stretch reads SSIRHRKKGS. Positions 44 to 53 are enriched in low complexity; sequence AGGSAVGATG. 2 consecutive transmembrane segments (helical) span residues 372-392 and 405-425; these read LTLT…SLFG and VFGY…MVTL. A Required for magnesium transport activity motif is present at residues 392-394; the sequence is GMN.

Belongs to the CorA metal ion transporter (MIT) (TC 1.A.35.5) family. In terms of tissue distribution, expressed in the whole plant except roots.

It is found in the membrane. In terms of biological role, magnesium transporter that may mediate the influx of magnesium. The sequence is that of Magnesium transporter MRS2-4 (MRS2-4) from Arabidopsis thaliana (Mouse-ear cress).